We begin with the raw amino-acid sequence, 213 residues long: Penicillin-binding protein activator LpoB (213 aa).

An N-terminal signal peptide occupies residues Met1–Gly19. Cys20 is lipidated: N-palmitoyl cysteine. Cys20 is lipidated: S-diacylglycerol cysteine. Residues Pro26–Pro71 form a disordered region. Residues Pro36–Pro50 are compositionally biased toward pro residues.

It belongs to the LpoB family. In terms of assembly, interacts with PBP1b.

Its subcellular location is the cell outer membrane. In terms of biological role, regulator of peptidoglycan synthesis that is essential for the function of penicillin-binding protein 1B (PBP1b). This Citrobacter koseri (strain ATCC BAA-895 / CDC 4225-83 / SGSC4696) protein is Penicillin-binding protein activator LpoB.